The sequence spans 70 residues: Ubiquinol-cytochrome c reductase complex assembly factor 5 (70 aa).

Over 1-19 the chain is Mitochondrial matrix; that stretch reads MFTRAQVRRILQRVPGKQR. The helical transmembrane segment at 20–41 threads the bilayer; it reads FGIYRFLPFFFVLGGTMEWIMI. Over 42–70 the chain is Mitochondrial intermembrane; that stretch reads KVRVGQETFYDVYRRKASERQYQRRLEDE.

The protein belongs to the UQCC5 family. Associates with the mitochondrial ribosome. Interacts with UQCC6. Interacts with MT-CYB; interacts with newly synthesizes MT-CYB. Forms a complex, named COMB/coordinator of mitochondrial CYTB biogenesis, composed of UQCC1, UQCC2, UQCC4, UQCC5 and UQCC6; regulates MT-CYB synthesis and promotes its membrane insertion.

The protein localises to the mitochondrion inner membrane. Its function is as follows. Required for the assembly and stability of the mitochondrial ubiquinol-cytochrome c reductase complex (complex III (CIII) or cytochrome b-c1 complex), a multisubunit transmembrane complex that is part of the mitochondrial electron transport chain (ETC) which drives oxidative phosphorylation. Mediates early complex III biogenesis. Participates in regulating the levels of electron transport chain proteins, and therefore energy supply, in response to changes in energy demand. Also involved in the first steps of cytochrome c oxidase complex (complex IV) assembly. The sequence is that of Ubiquinol-cytochrome c reductase complex assembly factor 5 from Homo sapiens (Human).